We begin with the raw amino-acid sequence, 255 residues long: Putative cysteine-rich repeat secretory protein 13 (255 aa).

Positions 1-21 (MSSNILAMVAMQLLLIRIVSS) are cleaved as a signal peptide. 2 consecutive Gnk2-homologous domains span residues 28 to 136 (YLNH…SVNT) and 142 to 252 (YDSF…LYPF).

This sequence belongs to the cysteine-rich repeat secretory protein family.

It localises to the secreted. The chain is Putative cysteine-rich repeat secretory protein 13 (CRRSP13) from Arabidopsis thaliana (Mouse-ear cress).